We begin with the raw amino-acid sequence, 53 residues long: Alpha-1-antiproteinase 1 (53 aa).

The disordered stretch occupies residues 1-28; sequence EDLQGDAVPETSATKDDNEXPEMIPMSL.

It belongs to the serpin family. N-glycosylated; contains biantennary glycans. Plasma.

It is found in the secreted. This is Alpha-1-antiproteinase 1 from Equus caballus (Horse).